Reading from the N-terminus, the 260-residue chain is Thrombin-like enzyme 2 (260 aa).

The signal sequence occupies residues 1–18 (MMLIRVLANLLILQLSYA). The propeptide occupies 19 to 24 (QKSSEL). Positions 25–251 (VIGGDECNIN…HLDWIQSIIA (227 aa)) constitute a Peptidase S1 domain. Intrachain disulfides connect Cys-31/Cys-165, Cys-52/Cys-68, Cys-102/Cys-258, Cys-144/Cys-212, Cys-176/Cys-191, and Cys-202/Cys-227. His-67 serves as the catalytic Charge relay system. The N-linked (GlcNAc...) asparagine glycan is linked to Asn-105. Residue Asp-112 is the Charge relay system of the active site. Asn-156 and Asn-172 each carry an N-linked (GlcNAc...) asparagine glycan. Ser-206 serves as the catalytic Charge relay system. N-linked (GlcNAc...) asparagine glycosylation is present at Asn-253.

This sequence belongs to the peptidase S1 family. Snake venom subfamily. As to quaternary structure, monomer. Expressed by the venom gland.

It is found in the secreted. Functionally, thrombin-like snake venom serine protease. The chain is Thrombin-like enzyme 2 from Trimeresurus albolabris (White-lipped pit viper).